The chain runs to 534 residues: Serine protease vicPb (534 aa).

The signal sequence occupies residues 1-17 (MLRYLLIPILYLQVVLG). N-linked (GlcNAc...) asparagine glycosylation is found at asparagine 34, asparagine 65, and asparagine 126. The Charge relay system role is filled by serine 174. Asparagine 297, asparagine 335, asparagine 352, asparagine 415, and asparagine 437 each carry an N-linked (GlcNAc...) asparagine glycan. The active-site Charge relay system is the aspartate 451.

It belongs to the peptidase S28 family.

It participates in mycotoxin biosynthesis. Its function is as follows. Serine protease, part of the gene cluster that mediates the biosynthesis of the secondary metabolite victorin, the molecular basis for Victoria blight of oats. Within the pathway, vicPa and vicPb are probably involved in the processing of the vicA1 and vicA2 precursors. The pathway starts with the processing of the precursor vicA1 by several endopeptidases including kexin proteases as well as the cluster-specific S28 family peptidases vicPa and vicPb to produce 7 identical copies of the hexapeptide Gly-Leu-Lys-Leu-Ala-Phe. After being excised from the precursor peptide, the core peptides are cyclized and modified post-translationally by enzymes encoded within the gene cluster. The ustYa family oxidase vicYb is required for the formation of the macrocycle in victorin and the copper amine oxidases (CAOs) vicK1 and vicK2 are responsible for converting victorin to the active form by oxidizing the N-terminal glycyl residue in the peptides to glyoxylate. Relaxed substrate specificity of enzymes in the victorin biosynthetic pathway results in a metabolic grid that produces a set of analogs including victorinines B, C, E or HV-toxin M. The sequence is that of Serine protease vicPb from Bipolaris victoriae (strain FI3) (Victoria blight of oats agent).